The primary structure comprises 434 residues: 26S proteasome regulatory subunit 6A (434 aa).

Ala2 bears the N-acetylalanine mark. Tyr180 carries the post-translational modification Phosphotyrosine. 222-229 (GPPGTGKT) is a binding site for ATP.

It belongs to the AAA ATPase family. Post-translationally, N-acetylated by NAT1.

The protein resides in the cytoplasm. The protein localises to the nucleus. Its function is as follows. The 26S proteasome is involved in the ATP-dependent degradation of ubiquitinated proteins. The regulatory (or ATPase) complex confers ATP dependency and substrate specificity to the 26S complex. This is 26S proteasome regulatory subunit 6A (RPT5) from Saccharomyces cerevisiae (strain ATCC 204508 / S288c) (Baker's yeast).